An 804-amino-acid polypeptide reads, in one-letter code: Leucine--tRNA ligase (804 aa).

The 'HIGH' region motif lies at 40–51; sequence PYPSGQGLHVGH. Positions 576-580 match the 'KMSKS' region motif; the sequence is KMSKS. Lys-579 contacts ATP.

This sequence belongs to the class-I aminoacyl-tRNA synthetase family.

It localises to the cytoplasm. The enzyme catalyses tRNA(Leu) + L-leucine + ATP = L-leucyl-tRNA(Leu) + AMP + diphosphate. This Enterococcus faecalis (strain ATCC 700802 / V583) protein is Leucine--tRNA ligase.